Here is a 392-residue protein sequence, read N- to C-terminus: Putative 8-amino-7-oxononanoate synthase (392 aa).

Arginine 22 provides a ligand contact to substrate. Pyridoxal 5'-phosphate is bound at residue 109–110 (GW). Histidine 139 is a substrate binding site. Pyridoxal 5'-phosphate-binding positions include serine 187, 212–215 (DEAH), and 239–242 (TFSK). Lysine 242 bears the N6-(pyridoxal phosphate)lysine mark. Threonine 356 is a substrate binding site.

This sequence belongs to the class-II pyridoxal-phosphate-dependent aminotransferase family. BioF subfamily. As to quaternary structure, homodimer. Pyridoxal 5'-phosphate is required as a cofactor.

The enzyme catalyses 6-carboxyhexanoyl-[ACP] + L-alanine + H(+) = (8S)-8-amino-7-oxononanoate + holo-[ACP] + CO2. It participates in cofactor biosynthesis; biotin biosynthesis. In terms of biological role, catalyzes the decarboxylative condensation of pimeloyl-[acyl-carrier protein] and L-alanine to produce 8-amino-7-oxononanoate (AON), [acyl-carrier protein], and carbon dioxide. This Paramagnetospirillum magneticum (strain ATCC 700264 / AMB-1) (Magnetospirillum magneticum) protein is Putative 8-amino-7-oxononanoate synthase (bioF).